A 164-amino-acid chain; its full sequence is Large ribosomal subunit protein eL24z (164 aa).

Positions 117–133 (ERIKKTKDEKKAKKVEY) are enriched in basic and acidic residues. The tract at residues 117 to 164 (ERIKKTKDEKKAKKVEYASKQQKSQVKGNIPKSAAPKAAKMGGGGGRR) is disordered.

This sequence belongs to the eukaryotic ribosomal protein eL24 family. In terms of assembly, interacts with the cauliflower mosaic virus transactivator TAV to form a TAV/60S complex. Interacts with REIL1 AND REIL2.

Functionally, might have an extraribosomal function in reinitiation of translation. The protein is Large ribosomal subunit protein eL24z (RPL24A) of Arabidopsis thaliana (Mouse-ear cress).